The sequence spans 465 residues: Cysteine--tRNA ligase (465 aa).

Residue Cys29 coordinates Zn(2+). Residues 31–41 carry the 'HIGH' region motif; it reads PTVYNYIHIGN. Residues Cys209, His234, and Glu238 each coordinate Zn(2+). Positions 266-270 match the 'KMSKS' region motif; sequence KMSKS. Lys269 contacts ATP. Ser270 carries the post-translational modification Phosphoserine.

Belongs to the class-I aminoacyl-tRNA synthetase family. In terms of assembly, monomer. The cofactor is Zn(2+).

Its subcellular location is the cytoplasm. It carries out the reaction tRNA(Cys) + L-cysteine + ATP = L-cysteinyl-tRNA(Cys) + AMP + diphosphate. The protein is Cysteine--tRNA ligase of Bacillus cereus (strain B4264).